We begin with the raw amino-acid sequence, 209 residues long: Kunitz trypsin inhibitor 1 (209 aa).

Positions 1-22 (MKATISITTIFLVVALAAPSLA) are cleaved as a signal peptide. Cystine bridges form between cysteine 63–cysteine 107 and cysteine 154–cysteine 162. Residue asparagine 156 is glycosylated (N-linked (GlcNAc...) asparagine).

This sequence belongs to the protease inhibitor I3 (leguminous Kunitz-type inhibitor) family.

Its function is as follows. Exhibits Kunitz trypsin protease inhibitor activity. This chain is Kunitz trypsin inhibitor 1, found in Arabidopsis thaliana (Mouse-ear cress).